The primary structure comprises 655 residues: p-hydroxybenzoic acid efflux pump subunit AaeB (655 aa).

Residues 1–12 (MGIFSIANQHIR) are Periplasmic-facing. A helical transmembrane segment spans residues 13-33 (FAVKLACAIVLALFIGFHFQL). At 34–37 (ETPR) the chain is on the cytoplasmic side. A helical transmembrane segment spans residues 38-58 (WAVLTAAIVAAGPAFAAGGEP). At 59–68 (YSGAIRYRGM) the chain is on the periplasmic side. A helical membrane pass occupies residues 69–89 (LRIIGTFIGCIAALIIIISMI). Topologically, residues 90–92 (RAP) are cytoplasmic. Residues 93–113 (LLMILVCCVWAGFCTWISSLV) traverse the membrane as a helical segment. At 114 to 120 (RIENSYA) the chain is on the periplasmic side. A helical transmembrane segment spans residues 121–141 (WGLSGYTALIIVITIQTEPLL). Residues 142–151 (TPQFALERCS) are Cytoplasmic-facing. The helical transmembrane segment at 152–172 (EIVIGIGCAILADLLFSPRSI) threads the bilayer. Topologically, residues 173–369 (KQEVDRELDC…RTTLSCILGT (197 aa)) are periplasmic. The helical transmembrane segment at 370–390 (LFWLWTGWTSGNGAMVMIAVV) threads the bilayer. The Cytoplasmic segment spans residues 391–406 (TSLAMRLPNPRMVCID). A helical membrane pass occupies residues 407 to 427 (FIYGTLAALPLGLLYFLVIIP). Topologically, residues 428-430 (NTQ) are periplasmic. The chain crosses the membrane as a helical span at residues 431–451 (QSMLLLCLSLAVLGFFIGIEV). Residues 452-459 (QKRRLGSM) are Cytoplasmic-facing. Residues 460 to 480 (GALASTINIIVLDNPMTFHFI) form a helical membrane-spanning segment. Position 481 (Q481) is a topological domain, periplasmic. A helical membrane pass occupies residues 482-502 (FLDSALGQIVGCMLAFIVILL). Over 503 to 655 (VRDKSKDRTG…HKYQNALTDS (153 aa)) the chain is Cytoplasmic.

It belongs to the aromatic acid exporter ArAE (TC 2.A.85) family.

Its subcellular location is the cell inner membrane. In terms of biological role, forms an efflux pump with AaeA. Could function as a metabolic relief valve, allowing to eliminate certain compounds when they accumulate to high levels in the cell. This chain is p-hydroxybenzoic acid efflux pump subunit AaeB, found in Salmonella typhi.